The primary structure comprises 131 residues: Methylglyoxal synthase (131 aa).

An MGS-like domain is found at 1-131; sequence MKIALIAHDK…GDLDYRKLRK (131 aa). Residues His8, Lys12, 34 to 37, and 54 to 55 contribute to the substrate site; these read TGTT and SG. Asp60 (proton donor/acceptor) is an active-site residue. Substrate is bound at residue His87.

This sequence belongs to the methylglyoxal synthase family.

The enzyme catalyses dihydroxyacetone phosphate = methylglyoxal + phosphate. Its function is as follows. Catalyzes the formation of methylglyoxal from dihydroxyacetone phosphate. This Bacillus anthracis (strain A0248) protein is Methylglyoxal synthase.